The sequence spans 266 residues: Beta-lactamase OXA-19 (266 aa).

The first 20 residues, 1–20 (MKTFAAYVITACLSSTALAS), serve as a signal peptide directing secretion. The active-site Acyl-ester intermediate is serine 67. Position 70 is an N6-carboxylysine (lysine 70). 205–207 (KTG) is a binding site for substrate.

Belongs to the class-D beta-lactamase family.

The catalysed reaction is a beta-lactam + H2O = a substituted beta-amino acid. In Pseudomonas aeruginosa, this protein is Beta-lactamase OXA-19 (bla).